The sequence spans 417 residues: NADH-quinone oxidoreductase subunit D (417 aa).

Belongs to the complex I 49 kDa subunit family. As to quaternary structure, NDH-1 is composed of 14 different subunits. Subunits NuoB, C, D, E, F, and G constitute the peripheral sector of the complex.

Its subcellular location is the cell inner membrane. The catalysed reaction is a quinone + NADH + 5 H(+)(in) = a quinol + NAD(+) + 4 H(+)(out). Functionally, NDH-1 shuttles electrons from NADH, via FMN and iron-sulfur (Fe-S) centers, to quinones in the respiratory chain. The immediate electron acceptor for the enzyme in this species is believed to be ubiquinone. Couples the redox reaction to proton translocation (for every two electrons transferred, four hydrogen ions are translocated across the cytoplasmic membrane), and thus conserves the redox energy in a proton gradient. The protein is NADH-quinone oxidoreductase subunit D of Francisella philomiragia subsp. philomiragia (strain ATCC 25017 / CCUG 19701 / FSC 153 / O#319-036).